A 308-amino-acid chain; its full sequence is Homoserine O-succinyltransferase (308 aa).

Cysteine 142 serves as the catalytic Acyl-thioester intermediate. Substrate-binding residues include lysine 163 and serine 192. Histidine 235 serves as the catalytic Proton acceptor. The active site involves glutamate 237. Residue arginine 249 participates in substrate binding.

The protein belongs to the MetA family.

It is found in the cytoplasm. The enzyme catalyses L-homoserine + succinyl-CoA = O-succinyl-L-homoserine + CoA. Its pathway is amino-acid biosynthesis; L-methionine biosynthesis via de novo pathway; O-succinyl-L-homoserine from L-homoserine: step 1/1. Transfers a succinyl group from succinyl-CoA to L-homoserine, forming succinyl-L-homoserine. The protein is Homoserine O-succinyltransferase of Pseudoalteromonas atlantica (strain T6c / ATCC BAA-1087).